The following is a 241-amino-acid chain: Uridylate kinase (241 aa).

9–10 (GS) contributes to the ATP binding site. Glycine 44 lines the UMP pocket. Positions 45 and 49 each coordinate ATP. UMP contacts are provided by residues aspartate 66 and 114–120 (VVAGQTT). Positions 140, 146, and 149 each coordinate ATP.

It belongs to the UMP kinase family. As to quaternary structure, homohexamer.

It is found in the cytoplasm. The catalysed reaction is UMP + ATP = UDP + ADP. Its pathway is pyrimidine metabolism; CTP biosynthesis via de novo pathway; UDP from UMP (UMPK route): step 1/1. Its activity is regulated as follows. Inhibited by UTP. Its function is as follows. Catalyzes the reversible phosphorylation of UMP to UDP. This chain is Uridylate kinase, found in Halobacterium salinarum (strain ATCC 29341 / DSM 671 / R1).